Here is a 168-residue protein sequence, read N- to C-terminus: MMWKWVTLLLFVLVCGDNPVNAAAHNPFVCCHQKNETAHTPPKKAWSLVNAILHSPSQCNHTNVALAYFNTTKGYKQVSCVNGFGLMSFCLALFDRLLTINVRVADQKFYDELLGYKRGFAAQFSKATTDSSGFKNNLELDLITTRHGRMASKTHVAGLTRSSASSQL.

The signal sequence occupies residues 1–22; that stretch reads MMWKWVTLLLFVLVCGDNPVNA. The interaction with gH stretch occupies residues 25–138; the sequence is HNPFVCCHQK…TDSSGFKNNL (114 aa).

The protein belongs to the herpesviridae glycoprotein L family. As to quaternary structure, interacts with glycoprotein H (gH); this interaction is necessary for the correct processing and cell surface expression of gH. The heterodimer gH/gL seems to interact with gB trimers during fusion.

It is found in the virion membrane. It localises to the host cell membrane. The protein localises to the host Golgi apparatus. The protein resides in the host trans-Golgi network. In terms of biological role, the heterodimer glycoprotein H-glycoprotein L is required for the fusion of viral and plasma membranes leading to virus entry into the host cell. Acts as a functional inhibitor of gH and maintains gH in an inhibited form. Upon binding to host integrins, gL dissociates from gH leading to activation of the viral fusion glycoproteins gB and gH. The protein is Envelope glycoprotein L of Connochaetes taurinus (Blue wildebeest).